A 561-amino-acid chain; its full sequence is Methionine--tRNA ligase (561 aa).

Positions 11–21 (PYVNTVPHLGN) match the 'HIGH' region motif. Zn(2+) is bound by residues C143, C146, C156, and C159. K334 provides a ligand contact to ATP.

Belongs to the class-I aminoacyl-tRNA synthetase family. MetG type 1 subfamily. Zn(2+) serves as cofactor.

It is found in the cytoplasm. It catalyses the reaction tRNA(Met) + L-methionine + ATP = L-methionyl-tRNA(Met) + AMP + diphosphate. Functionally, is required not only for elongation of protein synthesis but also for the initiation of all mRNA translation through initiator tRNA(fMet) aminoacylation. This Ignicoccus hospitalis (strain KIN4/I / DSM 18386 / JCM 14125) protein is Methionine--tRNA ligase.